Reading from the N-terminus, the 416-residue chain is MGSTIVEKIFSRKCGSDIKAGEVVMAPIDGAMIHDITGPLAIRKFYEMGGKQVFDPKSVIMLFDHQIPADSLEAAENHVFMRKFAAEQGIHNYDINEGVCHQVVLEKGRAAPGEIVVGADSHTCMYGAVGAFATGIGSTDMGFALKFGALYFKVPETVRAEISGKFQKRVGAKDLILSIAADIGADGATYQAIEFTGKTISKMDMAGRMTCCNMAIEMGAKAGIVPPDKVTWEYMKGRRKITPFALASDDDAKFAEKRTYNVADLEPQVAVPHNVDQGIPVGKVEGTHIDQVFIGSCTNGRYEDLVEAAEVLGKKKFDPKVRVLVIPASRDEYLKALEAGLVERFVRAGALVEAPCCGPCMGGSFGLIAAGEVSLATSNRNFRGRQGSTEGKVYLCSPATAAASAIKGEITDPREV.

[4Fe-4S] cluster-binding residues include C297, C357, and C360.

This sequence belongs to the aconitase/IPM isomerase family. LeuC type 2 subfamily. Heterodimer of LeuC and LeuD. [4Fe-4S] cluster is required as a cofactor.

The catalysed reaction is (2R,3S)-3-isopropylmalate = (2S)-2-isopropylmalate. The protein operates within amino-acid biosynthesis; L-leucine biosynthesis; L-leucine from 3-methyl-2-oxobutanoate: step 2/4. Catalyzes the isomerization between 2-isopropylmalate and 3-isopropylmalate, via the formation of 2-isopropylmaleate. This chain is 3-isopropylmalate dehydratase large subunit, found in Methanoregula boonei (strain DSM 21154 / JCM 14090 / 6A8).